We begin with the raw amino-acid sequence, 811 residues long: MLVSYNWLKNYVNLDAVTPEELAAKITKSGIEVEGVEYIAEKNENIVVGYVETCEKHPDADKLNVTQVSVGEETLQIVCGAPNIAKGQKVAVAKPGAVLPGNMKIKKVKLRGVESNGMICSLQELGLEEKYIPTDIAEGIFVFPEDEDIEVGSKVDEWLNLTDAVLDLDVLANRPDALSMLGVAYEVAAVLDQPIELPTKNIDYIDEKVSDQIEINIESKDLNPYYAAFMVKDVVIKPSPLWMRNYLMASGIRPINNIVDITNYVLLEYGQPLHAFDFDRFASNQIVIRRGVEGEVIQTLDEQERKLTEDNLVITNGSEPVALAGVMGGANSEVTDKTVNVLLEAAYFEATAVRHTVRQTGLRSESSTRFEKGIDPNRIVEAGLRACQLMQRYAGGKVLQGFAEENHLDTKSTKEVKVPLTQVNQRLGMELTEKDVQSVLNRLKFDFDQDGHTFIVHVPTRRRDITIFEDMLEEIIRIHGYDHLPYTIPQGWVKSGGLTDKQLLQRKIREFMMSSGAMETLTYSLTNEQNVKRLVTPNIDLENSYPISLAMPMSEDHKYLRLSIVPELLRILQHNIARKQTDLNYFEIGKVFISEEQELTHQPTEKLHLAGAFTGLWHNHPWQQDKKQVDFFVVKGIIEGLFNYLQLNISFKQVKMKDMHPGRCAELNIDGENIGFMGQLHPKTANVFDLPETYVFEIDLESVFEKYINVPSFTDIPRYPSVSRDIAFILDTEVFSGEVQQYIQEIGAPLVKEVSIFDVYQGEHLEDGKKSVAYRLMYQDPAKTLQDDEVESSYQQIVEAVNKKFGSYVRS.

One can recognise a tRNA-binding domain in the interval 40–156 (AEKNENIVVG…EDIEVGSKVD (117 aa)). The B5 domain occupies 411–486 (KSTKEVKVPL…RIHGYDHLPY (76 aa)). 4 residues coordinate Mg(2+): Asp464, Asp470, Glu473, and Glu474. One can recognise an FDX-ACB domain in the interval 717 to 810 (PRYPSVSRDI…VNKKFGSYVR (94 aa)).

It belongs to the phenylalanyl-tRNA synthetase beta subunit family. Type 1 subfamily. As to quaternary structure, tetramer of two alpha and two beta subunits. Mg(2+) is required as a cofactor.

Its subcellular location is the cytoplasm. The enzyme catalyses tRNA(Phe) + L-phenylalanine + ATP = L-phenylalanyl-tRNA(Phe) + AMP + diphosphate + H(+). This Oceanobacillus iheyensis (strain DSM 14371 / CIP 107618 / JCM 11309 / KCTC 3954 / HTE831) protein is Phenylalanine--tRNA ligase beta subunit.